The following is a 205-amino-acid chain: Large ribosomal subunit protein uL4 (205 aa).

Residues 44–79 (RAGTKAQKTRREVSGGGAKPWRQKGTGRARAGSSRS) form a disordered region.

Belongs to the universal ribosomal protein uL4 family. Part of the 50S ribosomal subunit.

One of the primary rRNA binding proteins, this protein initially binds near the 5'-end of the 23S rRNA. It is important during the early stages of 50S assembly. It makes multiple contacts with different domains of the 23S rRNA in the assembled 50S subunit and ribosome. In terms of biological role, forms part of the polypeptide exit tunnel. This chain is Large ribosomal subunit protein uL4, found in Coxiella burnetii (strain RSA 331 / Henzerling II).